A 353-amino-acid chain; its full sequence is Cellulose-complementing protein (353 aa).

Disordered stretches follow at residues M1–F21, P75–V94, and A117–P337. A compositionally biased stretch (pro residues) spans A80–P91. 2 stretches are compositionally biased toward low complexity: residues A117–A132 and I142–A164. Residues P165–P175 show a composition bias toward pro residues. 2 stretches are compositionally biased toward polar residues: residues Q196–S226 and S278–R304.

This is Cellulose-complementing protein (ccpAX) from Komagataeibacter xylinus (Gluconacetobacter xylinus).